A 723-amino-acid polypeptide reads, in one-letter code: Methionine--tRNA ligase (723 aa).

Positions 11-21 (PYANGPIHAGH) match the 'HIGH' region motif. Cys143, Cys146, Cys156, and Cys159 together coordinate Zn(2+). The 'KMSKS' region motif lies at 344-348 (KFSTS). An ATP-binding site is contributed by Thr347. A tRNA-binding domain is found at 623–723 (DFAKLDLRVG…KEVKLGAKVR (101 aa)).

Belongs to the class-I aminoacyl-tRNA synthetase family. MetG type 1 subfamily. Homodimer. Zn(2+) serves as cofactor.

The protein resides in the cytoplasm. It carries out the reaction tRNA(Met) + L-methionine + ATP = L-methionyl-tRNA(Met) + AMP + diphosphate. Functionally, is required not only for elongation of protein synthesis but also for the initiation of all mRNA translation through initiator tRNA(fMet) aminoacylation. The chain is Methionine--tRNA ligase from Pyrococcus horikoshii (strain ATCC 700860 / DSM 12428 / JCM 9974 / NBRC 100139 / OT-3).